The primary structure comprises 427 residues: Vitamin D3 receptor (427 aa).

A DNA-binding region (nuclear receptor) is located at residues 21 to 96 (PRICGVCGDR…IGMMKEFILT (76 aa)). Cys24, Cys27, Cys41, Cys44, Cys60, Cys66, Cys76, and Cys79 together coordinate Zn(2+). NR C4-type zinc fingers lie at residues 24–44 (CGVCGDRATGFHFNAMTCEGC) and 60–79 (CPFNGDCRITKDNRRHCQAC). The hinge stretch occupies residues 97 to 126 (DEEVQRKREMILKRKEEEALKDSLRPKLSE). The region spanning 127-423 (EQQRIIAILL…LTPLVLEVFG (297 aa)) is the NR LBD domain. Tyr143 is a binding site for calcitriol. The tract at residues 149 to 201 (DFGQFRPPVRGDEEEGTLPSRSSSAHAPSFSGSSSSSCSDQYTSSPDTMEPAS) is disordered. Residues 168-193 (SRSSSAHAPSFSGSSSSSCSDQYTSS) are compositionally biased toward low complexity. Ser237 contributes to the calcitriol binding site. The segment at 246-264 (KMIPGFRDLTAEDQIVLLK) is interaction with coactivator LXXLL motif. Calcitriol-binding residues include Arg274, Ser278, His305, and His397. Positions 416-424 (PLVLEVFGN) match the 9aaTAD motif.

It belongs to the nuclear hormone receptor family. NR1 subfamily. In terms of assembly, homodimer in the absence of bound vitamin D3. Heterodimer with RXRA after vitamin D3 binding. Interacts with MED1, NCOA1, NCOA2, NCOA3 and NCOA6 coactivators, leading to a strong increase of transcription of target genes. Interacts with the corepressor NCOR1. Interacts with SNW1. Interacts with IRX4, the interaction does not affect its transactivation activity. Interacts with CRY1. Interacts with CRY2 in a ligand-dependent manner. Ubiquitinated by UBR5, leading to its degradation: UBR5 specifically recognizes and binds ligand-bound VDR when it is not associated with coactivators (NCOAs). In presence of NCOAs, the UBR5-degron is not accessible, preventing its ubiquitination and degradation.

It is found in the nucleus. It localises to the cytoplasm. In terms of biological role, nuclear receptor for calcitriol, the active form of vitamin D3 which mediates the action of this vitamin on cells. Enters the nucleus upon vitamin D3 binding where it forms heterodimers with the retinoid X receptor/RXR. The VDR-RXR heterodimers bind to specific response elements on DNA and activate the transcription of vitamin D3-responsive target genes. Plays a central role in calcium homeostasis. Also functions as a receptor for the secondary bile acid lithocholic acid (LCA) and its metabolites. In Sus scrofa (Pig), this protein is Vitamin D3 receptor (VDR).